The chain runs to 200 residues: Phospholipase A2 inhibitor NAI (200 aa).

The signal sequence occupies residues M1–C19. 8 cysteine pairs are disulfide-bonded: C22–C46, C25–C32, C39–C67, C73–C94, C95–C100, C120–C145, C138–C165, and C171–C191.

It belongs to the CNF-like-inhibitor family. In terms of assembly, heterotrimer of 2 subunits A and 1 subunit B; non-covalently linked. In terms of tissue distribution, expressed by the liver.

The protein resides in the secreted. Inhibits the enzymatic activity of all phospholipase A2 tested, binding with micromole to nanomole affinity. The polypeptide is Phospholipase A2 inhibitor NAI (Notechis ater (Black tiger snake)).